Here is a 227-residue protein sequence, read N- to C-terminus: 2,3-bisphosphoglycerate-dependent phosphoglycerate mutase (227 aa).

Residues 7–14 (RHGFSEWN), 20–21 (TG), Arg59, 86–89 (ERHY), Lys97, 113–114 (RR), and 182–183 (GN) contribute to the substrate site. Residue His8 is the Tele-phosphohistidine intermediate of the active site. Residue Glu86 is the Proton donor/acceptor of the active site.

This sequence belongs to the phosphoglycerate mutase family. BPG-dependent PGAM subfamily. As to quaternary structure, homodimer.

The catalysed reaction is (2R)-2-phosphoglycerate = (2R)-3-phosphoglycerate. It participates in carbohydrate degradation; glycolysis; pyruvate from D-glyceraldehyde 3-phosphate: step 3/5. In terms of biological role, catalyzes the interconversion of 2-phosphoglycerate and 3-phosphoglycerate. This Actinobacillus pleuropneumoniae serotype 5b (strain L20) protein is 2,3-bisphosphoglycerate-dependent phosphoglycerate mutase.